Consider the following 322-residue polypeptide: Cytochrome c biogenesis protein CcsA (322 aa).

8 consecutive transmembrane segments (helical) span residues 6–26 (LQLILETFSFFIYFILTFLFF), 45–65 (LIANVSIFLLLITRWITAGYF), 69–89 (NLYESLFFLVWGLNTIWLFLY), 97–117 (LLDNSVSLLLTLLVGFLHFIL), 144–164 (MISYATLMIGSLLSIIYLYFL), 230–250 (LITFGFPLLTIGIIAGAVWAN), 265–285 (WALITWLIFAIYLHTRIIKGW), and 291–311 (AMVASLGFFIIWICYLGVNLL).

Belongs to the CcmF/CycK/Ccl1/NrfE/CcsA family. May interact with Ccs1.

The protein resides in the plastid. It is found in the cyanelle thylakoid membrane. Its function is as follows. Required during biogenesis of c-type cytochromes (cytochrome c6 and cytochrome f) at the step of heme attachment. The polypeptide is Cytochrome c biogenesis protein CcsA (Cyanophora paradoxa).